A 143-amino-acid polypeptide reads, in one-letter code: UPF0260 protein plu2141 (143 aa).

The protein belongs to the UPF0260 family.

This is UPF0260 protein plu2141 from Photorhabdus laumondii subsp. laumondii (strain DSM 15139 / CIP 105565 / TT01) (Photorhabdus luminescens subsp. laumondii).